Consider the following 1370-residue polypeptide: Reverse gyrase 1 (1370 aa).

The RG N-terminal-type zinc-finger motif lies at 6-47 (AASRGVYRYLCPNCGGPNSEERLSRGLPCPRCLPRLPRKGVS). Cys-16, Cys-19, Cys-34, and Cys-37 together coordinate Zn(2+). ATP contacts are provided by residues Gln-95 and 112–119 (APTGVGKT). One can recognise a Helicase ATP-binding domain in the interval 99-287 (AKRLARGDSF…RKKLLEVKRR (189 aa)). A DEAD box motif is present at residues 220–223 (DDVD). A topoisomerase I region spans residues 643-1370 (ELVRTALLVV…VSRVWGAGVG (728 aa)). The region spanning 647–825 (TALLVVESPN…DIKRLEFHEV (179 aa)) is the Toprim domain. Position 653 (Glu-653) interacts with Mg(2+). The segment at 744 to 772 (IKRCLDCGYQFVDEASRCPRCGSELIRNS) adopts an RG C-terminal-type zinc-finger fold. Residues Cys-747, Cys-750, Cys-761, and Cys-764 each coordinate Zn(2+). Asp-794 is a binding site for Mg(2+). Residues 841–1323 (DDNLVDAQVV…SVFNEISDLA (483 aa)) enclose the Topo IA-type catalytic domain. Catalysis depends on Tyr-1028, which acts as the O-(5'-phospho-DNA)-tyrosine intermediate.

This sequence in the N-terminal section; belongs to the DEAD box helicase family. DDVD subfamily. It in the C-terminal section; belongs to the type IA topoisomerase family. Monomer. Zn(2+) serves as cofactor. Mg(2+) is required as a cofactor.

The protein localises to the cytoplasm. It catalyses the reaction ATP + H2O = ADP + phosphate + H(+). Functionally, modifies the topological state of DNA by introducing positive supercoils in an ATP-dependent process, increasing the linking number in steps of +1. Binds to single-stranded DNA, transiently cleaves and then rejoins the ends, introducing a positive supercoil in the process. The scissile phosphodiester is attacked by the catalytic tyrosine of the enzyme, resulting in the formation of a DNA-(5'-phosphotyrosyl)-enzyme intermediate. Probably involved in rewinding DNA strands in regions of the chromosome that have opened up to allow replication, transcription, DNA repair and/or for DNA protection. The sequence is that of Reverse gyrase 1 from Aeropyrum pernix (strain ATCC 700893 / DSM 11879 / JCM 9820 / NBRC 100138 / K1).